Reading from the N-terminus, the 185-residue chain is Threonylcarbamoyl-AMP synthase (185 aa).

One can recognise a YrdC-like domain in the interval 1–185; sequence MDNFEQVLNA…AKTSQILRQG (185 aa). The disordered stretch occupies residues 163–185; sequence ETSGRDKPSEIRDAKTSQILRQG. A compositionally biased stretch (basic and acidic residues) spans 164–177; sequence TSGRDKPSEIRDAK.

The protein belongs to the SUA5 family. TsaC subfamily.

The protein localises to the cytoplasm. The enzyme catalyses L-threonine + hydrogencarbonate + ATP = L-threonylcarbamoyladenylate + diphosphate + H2O. Required for the formation of a threonylcarbamoyl group on adenosine at position 37 (t(6)A37) in tRNAs that read codons beginning with adenine. Catalyzes the conversion of L-threonine, HCO(3)(-)/CO(2) and ATP to give threonylcarbamoyl-AMP (TC-AMP) as the acyladenylate intermediate, with the release of diphosphate. The sequence is that of Threonylcarbamoyl-AMP synthase from Vibrio parahaemolyticus serotype O3:K6 (strain RIMD 2210633).